A 401-amino-acid chain; its full sequence is Na(+)/H(+) antiporter NhaA 2 (401 aa).

11 helical membrane-spanning segments follow: residues alanine 13–proline 33, leucine 59–valine 79, isoleucine 94–tryptophan 114, glycine 125–glycine 145, leucine 154–phenylalanine 174, aspartate 178–asparagine 198, valine 209–alanine 229, tryptophan 260–glycine 280, leucine 292–isoleucine 312, glycine 332–phenylalanine 352, and valine 363–alanine 383.

Belongs to the NhaA Na(+)/H(+) (TC 2.A.33) antiporter family.

It is found in the cell inner membrane. The catalysed reaction is Na(+)(in) + 2 H(+)(out) = Na(+)(out) + 2 H(+)(in). In terms of biological role, na(+)/H(+) antiporter that extrudes sodium in exchange for external protons. The polypeptide is Na(+)/H(+) antiporter NhaA 2 (Pseudoalteromonas atlantica (strain T6c / ATCC BAA-1087)).